A 124-amino-acid chain; its full sequence is Apolipoprotein C-IV (124 aa).

A signal peptide spans Met1 to Ser27. Residue Asn107 is glycosylated (N-linked (GlcNAc...) asparagine).

The protein belongs to the apolipoprotein C4 family. In terms of tissue distribution, expressed by the liver and secreted in plasma.

The protein localises to the secreted. In terms of biological role, may participate in lipoprotein metabolism. This is Apolipoprotein C-IV (Apoc4) from Mus musculus (Mouse).